The following is a 176-amino-acid chain: COA8 family protein CG14806, mitochondrial (176 aa).

The transit peptide at 1 to 23 directs the protein to the mitochondrion; it reads MNKCFRCQPRISLFQFSLPRCYA.

It belongs to the COA8 family.

It localises to the mitochondrion inner membrane. In terms of biological role, may be required for cytochrome c complex (COX) assembly and function, COX being the terminal component of the mitochondrial respiratory chain. (Microbial infection) Required for optimal replication of E.chaffeensis. The polypeptide is COA8 family protein CG14806, mitochondrial (Drosophila melanogaster (Fruit fly)).